Consider the following 163-residue polypeptide: Mating-type protein ALPHA2 (163 aa).

Positions 80-142 form a DNA-binding region, homeobox; TALE-type; that stretch reads IEKRSKRFPK…NRRRKERTLT (63 aa).

It belongs to the TALE/M-ATYP homeobox family.

It is found in the nucleus. Its function is as follows. Mating type proteins are sequence specific DNA-binding proteins that act as master switches in yeast differentiation by controlling gene expression in a cell type-specific fashion. The protein is Mating-type protein ALPHA2 (MATALPHA2) of Pichia angusta (Yeast).